Consider the following 349-residue polypeptide: Ion-translocating oxidoreductase complex subunit D (349 aa).

A run of 4 helical transmembrane segments spans residues 20–40 (IMFLVVLSCIPGLCTEIYFFG), 42–62 (GVLIQTLLFVIISLLFEIIIL), 83–105 (VLLGLSTPCALPWWMIIFSCFFA), and 120–140 (IFNPAMIGYVVLLISFPVHMT). Threonine 184 bears the FMN phosphoryl threonine mark. 5 consecutive transmembrane segments (helical) span residues 212-232 (IVSIAWKYINISFLIGGCFLL), 236-256 (VICWRIPLSFLSSLIFFSSIT), 263-283 (FFCSPLFHLFSGGTMMCAFFI), 291-311 (SCTKIGKIFFGLIIGFLVWII), and 319-339 (DGIAFSVLFANMIVPLMDAYL).

It belongs to the NqrB/RnfD family. The complex is composed of six subunits: RnfA, RnfB, RnfC, RnfD, RnfE and RnfG. FMN serves as cofactor.

The protein resides in the cell inner membrane. Functionally, part of a membrane-bound complex that couples electron transfer with translocation of ions across the membrane. The polypeptide is Ion-translocating oxidoreductase complex subunit D (Buchnera aphidicola subsp. Schizaphis graminum (strain Sg)).